The sequence spans 319 residues: Histone-lysine N-methyltransferase set5 (319 aa).

Residues 4–141 enclose the SET domain; that stretch reads YETEIYKVVP…AGEEILTTYI (138 aa). At Ser316 the chain carries Phosphoserine. Phosphothreonine is present on Thr318.

This sequence belongs to the class V-like SAM-binding methyltransferase superfamily.

The protein resides in the nucleus. It is found in the chromosome. It localises to the cytoplasm. The enzyme catalyses L-lysyl-[histone] + S-adenosyl-L-methionine = N(6)-methyl-L-lysyl-[histone] + S-adenosyl-L-homocysteine + H(+). Its function is as follows. Histone methyltransferase that monomethylates 'Lys-5', 'Lys-8' and 'Lys-12' of histone H4 (H4K5me1, H4K8me1 and H4K12me1, respectively), thereby controlling gene expression and remodeling chromatin structures. Monomethylation of 'Lys-5' of histone H4 (H4K5me1) is required for subsequent acetylation and formation of N6-acetyl-N6-methyllysine (H4K5acme). This is Histone-lysine N-methyltransferase set5 (set5) from Schizosaccharomyces pombe (strain 972 / ATCC 24843) (Fission yeast).